A 408-amino-acid chain; its full sequence is S-adenosylmethionine:tRNA ribosyltransferase-isomerase (408 aa).

This sequence belongs to the QueA family. In terms of assembly, monomer.

It localises to the cytoplasm. It catalyses the reaction 7-aminomethyl-7-carbaguanosine(34) in tRNA + S-adenosyl-L-methionine = epoxyqueuosine(34) in tRNA + adenine + L-methionine + 2 H(+). Its pathway is tRNA modification; tRNA-queuosine biosynthesis. Transfers and isomerizes the ribose moiety from AdoMet to the 7-aminomethyl group of 7-deazaguanine (preQ1-tRNA) to give epoxyqueuosine (oQ-tRNA). This is S-adenosylmethionine:tRNA ribosyltransferase-isomerase from Trichormus variabilis (strain ATCC 29413 / PCC 7937) (Anabaena variabilis).